The sequence spans 174 residues: MGKITFYEDRGFQGRHYECSTDHSNLQPYFSRCNSVRVDSGCWMLYEQPNFAGCQYFLRRGDYPDYQQWMGFSDSVRSCRLIPHSSSHRIKIYEREDYRGQMVEITDDCSHLQDRFHFSDFHSFHVMEGYWVLYEMPNYRGRQYLLRPGEYRRYHDWGAMNARVGSLRRIMDFY.

Beta/gamma crystallin 'Greek key' domains follow at residues 2 to 40 (GKITFYEDRGFQGRHYECSTDHSNLQPYFSRCNSVRVDS) and 41 to 83 (GCWM…RLIP). Residues 84–87 (HSSS) are connecting peptide. Beta/gamma crystallin 'Greek key' domains lie at 88–128 (HRIK…HVME) and 129–171 (GYWV…RRIM).

The protein belongs to the beta/gamma-crystallin family. As to expression, detected in the superior olivary complex of the auditory hindbrain.

Crystallins are the dominant structural components of the vertebrate eye lens. The sequence is that of Gamma-crystallin E (Cryge) from Mus musculus (Mouse).